A 462-amino-acid polypeptide reads, in one-letter code: Argininosuccinate lyase (462 aa).

It belongs to the lyase 1 family. Argininosuccinate lyase subfamily.

The protein resides in the cytoplasm. The catalysed reaction is 2-(N(omega)-L-arginino)succinate = fumarate + L-arginine. The protein operates within amino-acid biosynthesis; L-arginine biosynthesis; L-arginine from L-ornithine and carbamoyl phosphate: step 3/3. This chain is Argininosuccinate lyase, found in Rippkaea orientalis (strain PCC 8801 / RF-1) (Cyanothece sp. (strain PCC 8801)).